Reading from the N-terminus, the 30-residue chain is Circulin-D (30 aa).

A cross-link (cyclopeptide (Lys-Asp)) is located at residues 1-30; that stretch reads KIPCGESCVWIPCVTSIFNCKCENKVCYHD. 3 cysteine pairs are disulfide-bonded: C4-C20, C8-C22, and C13-C27.

In terms of processing, this is a cyclic peptide.

Its function is as follows. Probably participates in a plant defense mechanism. Inhibits the cytopathic effects of the human immunodeficiency virus. This chain is Circulin-D, found in Chassalia parviflora.